Consider the following 224-residue polypeptide: UPF0758 protein Sde_3678 (224 aa).

Positions 102-224 constitute an MPN domain; the sequence is SLTSTTAVKQ…AVSFAERGWI (123 aa). Zn(2+) contacts are provided by H173, H175, and D186. Residues 173–186 carry the JAMM motif motif; sequence HNHPSGIAEPSEPD.

It belongs to the UPF0758 family.

The chain is UPF0758 protein Sde_3678 from Saccharophagus degradans (strain 2-40 / ATCC 43961 / DSM 17024).